Reading from the N-terminus, the 380-residue chain is Serpin B7 (380 aa).

Serine 217 and serine 223 each carry phosphoserine.

The protein belongs to the serpin family. Ov-serpin subfamily. In terms of tissue distribution, predominantly expressed in mesangial cells. Expressed in the epidermis of the whole body.

The protein resides in the cytoplasm. In terms of biological role, might function as an inhibitor of Lys-specific proteases. Might influence the maturation of megakaryocytes via its action as a serpin. The protein is Serpin B7 (SERPINB7) of Homo sapiens (Human).